The following is a 191-amino-acid chain: MSNINVIDILKESDALLEGHFLLSSGRHSNRYCQCAKLLQCPQKSEKVISVIAEKLKEVDFNIIVGPAMGGVIVSYELARQTNKPGIFAERKEGVMCIRRGFEIKKGDKVIISEDVVTTGKSSLEVAKVIEEMGGEVVGIACIVDRRAEDVKTNYPIYSACKLEIETYEKDNCELCKKNIPFVKPGSREQK.

114–122 is a 5-phospho-alpha-D-ribose 1-diphosphate binding site; sequence EDVVTTGKS. Positions 118 and 146 each coordinate orotate.

The protein belongs to the purine/pyrimidine phosphoribosyltransferase family. PyrE subfamily. In terms of assembly, homodimer. It depends on Mg(2+) as a cofactor.

The enzyme catalyses orotidine 5'-phosphate + diphosphate = orotate + 5-phospho-alpha-D-ribose 1-diphosphate. The protein operates within pyrimidine metabolism; UMP biosynthesis via de novo pathway; UMP from orotate: step 1/2. Functionally, catalyzes the transfer of a ribosyl phosphate group from 5-phosphoribose 1-diphosphate to orotate, leading to the formation of orotidine monophosphate (OMP). The chain is Orotate phosphoribosyltransferase from Clostridium botulinum (strain Langeland / NCTC 10281 / Type F).